Consider the following 167-residue polypeptide: V-type proton ATPase subunit c' (167 aa).

Over 1–13 the chain is Lumenal; the sequence is MAEIMADSELAPK. The helical transmembrane segment at 14-34 threads the bilayer; that stretch reads FAPFIGMAGIAAAMIFGSAGA. Residues 35–59 are Cytoplasmic-facing; it reads AYGTAKSGIGIAGVGTFRPDLIMKC. A helical transmembrane segment spans residues 60–80; the sequence is LIPVVMSGIIAVYALVVAVLI. At 81-101 the chain is on the lumenal side; the sequence is AQDLGPPGSGQHYSLFNGFMH. Residues 102–122 form a helical membrane-spanning segment; sequence LACGLSVGLTGLAAGYCIGIV. Topologically, residues 123–140 are cytoplasmic; the sequence is GDKGVRSFMLQSRIFVGM. Residues 141-161 traverse the membrane as a helical segment; sequence VLILIFGEVLGLYGLIVALIL. The Lumenal portion of the chain corresponds to 162-167; the sequence is NTKSKG.

It belongs to the V-ATPase proteolipid subunit family. In terms of assembly, V-ATPase is a heteromultimeric enzyme composed of a peripheral catalytic V1 complex (components A to H) attached to an integral membrane V0 proton pore complex (components: a, c, c', c'', d, e, f and VOA1). The decameric c-ring forms the proton-conducting pore, and is composed of eight proteolipid subunits c, one subunit c' and one subunit c''.

Its subcellular location is the vacuole membrane. Its function is as follows. Proton-conducting pore forming subunit of the V0 complex of vacuolar(H+)-ATPase (V-ATPase), a multisubunit enzyme composed of a peripheral complex (V1) that hydrolyzes ATP and a membrane integral complex (V0) that translocates protons. V-ATPase is responsible for acidifying and maintaining the pH of intracellular compartments. This is V-type proton ATPase subunit c' (vma-11) from Neurospora crassa (strain ATCC 24698 / 74-OR23-1A / CBS 708.71 / DSM 1257 / FGSC 987).